Consider the following 286-residue polypeptide: Homoserine kinase (286 aa).

78 to 88 (PLARGLGSSSS) contributes to the ATP binding site.

It belongs to the GHMP kinase family. Homoserine kinase subfamily.

The protein resides in the cytoplasm. The enzyme catalyses L-homoserine + ATP = O-phospho-L-homoserine + ADP + H(+). The protein operates within amino-acid biosynthesis; L-threonine biosynthesis; L-threonine from L-aspartate: step 4/5. Its function is as follows. Catalyzes the ATP-dependent phosphorylation of L-homoserine to L-homoserine phosphate. This is Homoserine kinase from Streptococcus equi subsp. equi (strain 4047).